Here is a 268-residue protein sequence, read N- to C-terminus: NAD kinase (268 aa).

Asp-45 acts as the Proton acceptor in catalysis. NAD(+)-binding positions include Asp-45–Gly-46, Asn-122–Glu-123, Arg-148, Asp-150, Thr-161–Ser-166, Ala-185, and Gln-223.

The protein belongs to the NAD kinase family. A divalent metal cation serves as cofactor.

Its subcellular location is the cytoplasm. It carries out the reaction NAD(+) + ATP = ADP + NADP(+) + H(+). In terms of biological role, involved in the regulation of the intracellular balance of NAD and NADP, and is a key enzyme in the biosynthesis of NADP. Catalyzes specifically the phosphorylation on 2'-hydroxyl of the adenosine moiety of NAD to yield NADP. This is NAD kinase from Latilactobacillus sakei subsp. sakei (strain 23K) (Lactobacillus sakei subsp. sakei).